The primary structure comprises 65 residues: Large ribosomal subunit protein bL33c (65 aa).

This sequence belongs to the bacterial ribosomal protein bL33 family.

It localises to the plastid. It is found in the chloroplast. The sequence is that of Large ribosomal subunit protein bL33c from Staurastrum punctulatum (Green alga).